The sequence spans 798 residues: MIKKIITTCMGLNNGLALFGVGLIAIAILVTYPKLPSLDSLQHYKPKLPLTIYSSDGQVIGVYGEQRREFTKIDDFPKILKDAVIAAEDKRFYDHWGVDVWGVARAVIGNVMAGGVQSGASTITQQVAKNFYLSSERSFTRKFNEALLAYKIEQSLSKDKILELYFNQIYLGQRAYGFASAAQTYFNKNVNDLTLAEAAMLAGLPKAPSAYNPIVNPERAKLRQAYILNNMLEEGMITLQQRDQALKEELHYERFVQNIDQSALYVAEMARQELFEKYGEDAYTQGFKVYTTVDTAHQRVATEALRKVLRNFDRGSSYRGAENYIDLSKSDNVEETVSQYLSTLYTVDKMIPAVVLEASRKGVQIQLPSGRKVTLNNHALGFAARAVNNEKMGDDRIRRGSVIRVKGSGDTFTVVQEPLLQGALVSLDAKTGAVRALVGGYDYHSKTFNRATQAMRQPGSTFKPFIYSAALAKGMTASTMINDAPISLPGKGANGKAWNPKNSDGRYAGYITLRQALTASKNMVSIRILMSIGIGYAQQYIQRFGFKPSEIPASLSMALGAGETTPLRIAEGYSVFANGGYKVSAHVIDKIYDSQGRLRAQMQPLVAGENAPQAIDPRNAYIMYKIMQDVVRVGTARGAATLGRSDIAGKTGTTNDNKDAWFVGFNPNVVTAVYIGFDKPRSMGRAGYGGTIAVPVWVEYIGFALKGTSVKPMKAPEGVVTNGGEVYMRERMTTSSDLALDNSGIRPRPTQPARRAVPNENRRRAESNTAPAREESDETPVLPSNTGNNNRQQLDSLF.

Over 1-9 (MIKKIITTC) the chain is Cytoplasmic. Residues 10 to 30 (MGLNNGLALFGVGLIAIAILV) form a helical; Signal-anchor for type II membrane protein membrane-spanning segment. Topologically, residues 31–798 (TYPKLPSLDS…NNRQQLDSLF (768 aa)) are periplasmic. The segment at 50-218 (LTIYSSDGQV…SAYNPIVNPE (169 aa)) is transglycosylase. Glutamate 88 acts as the Proton donor; for transglycosylase activity in catalysis. Residues 413–699 (TVVQEPLLQG…GTIAVPVWVE (287 aa)) form a transpeptidase region. Residue serine 460 is the Acyl-ester intermediate; for transpeptidase activity of the active site. Positions 734–798 (TSSDLALDNS…NNRQQLDSLF (65 aa)) are disordered. The segment covering 782-798 (LPSNTGNNNRQQLDSLF) has biased composition (polar residues).

It in the N-terminal section; belongs to the glycosyltransferase 51 family. The protein in the C-terminal section; belongs to the transpeptidase family.

It is found in the cell inner membrane. It catalyses the reaction [GlcNAc-(1-&gt;4)-Mur2Ac(oyl-L-Ala-gamma-D-Glu-L-Lys-D-Ala-D-Ala)](n)-di-trans,octa-cis-undecaprenyl diphosphate + beta-D-GlcNAc-(1-&gt;4)-Mur2Ac(oyl-L-Ala-gamma-D-Glu-L-Lys-D-Ala-D-Ala)-di-trans,octa-cis-undecaprenyl diphosphate = [GlcNAc-(1-&gt;4)-Mur2Ac(oyl-L-Ala-gamma-D-Glu-L-Lys-D-Ala-D-Ala)](n+1)-di-trans,octa-cis-undecaprenyl diphosphate + di-trans,octa-cis-undecaprenyl diphosphate + H(+). The catalysed reaction is Preferential cleavage: (Ac)2-L-Lys-D-Ala-|-D-Ala. Also transpeptidation of peptidyl-alanyl moieties that are N-acyl substituents of D-alanine.. Its pathway is cell wall biogenesis; peptidoglycan biosynthesis. In terms of biological role, cell wall formation. Synthesis of cross-linked peptidoglycan from the lipid intermediates. The enzyme has a penicillin-insensitive transglycosylase N-terminal domain (formation of linear glycan strands) and a penicillin-sensitive transpeptidase C-terminal domain (cross-linking of the peptide subunits). The chain is Penicillin-binding protein 1A (mrcA) from Neisseria flavescens.